We begin with the raw amino-acid sequence, 207 residues long: 2,3-bisphosphoglycerate-dependent phosphoglycerate mutase (207 aa).

Substrate is bound by residues 10-17, 23-24, arginine 62, 89-92, lysine 100, 116-117, and 160-161; these read RHGQSEWN, TG, ERDY, RR, and GN. Histidine 11 acts as the Tele-phosphohistidine intermediate in catalysis. Glutamate 89 functions as the Proton donor/acceptor in the catalytic mechanism.

It belongs to the phosphoglycerate mutase family. BPG-dependent PGAM subfamily. In terms of assembly, homodimer.

It catalyses the reaction (2R)-2-phosphoglycerate = (2R)-3-phosphoglycerate. Its pathway is carbohydrate degradation; glycolysis; pyruvate from D-glyceraldehyde 3-phosphate: step 3/5. Catalyzes the interconversion of 2-phosphoglycerate and 3-phosphoglycerate. This chain is 2,3-bisphosphoglycerate-dependent phosphoglycerate mutase, found in Bradyrhizobium sp. (strain ORS 278).